The following is a 199-amino-acid chain: Probable thymidylate kinase (199 aa).

Residue 7–14 (GLDGSGKT) coordinates ATP.

It belongs to the thymidylate kinase family.

The catalysed reaction is dTMP + ATP = dTDP + ADP. The chain is Probable thymidylate kinase from Halobacterium salinarum (strain ATCC 29341 / DSM 671 / R1).